A 476-amino-acid polypeptide reads, in one-letter code: Protein transport protein Sec61 subunit alpha isoform 1 (476 aa).

The Cytoplasmic segment spans residues 1–33 (MAIKFLEVIKPFCVILPEIQKPERKIQFKEKVL). A helical membrane pass occupies residues 34 to 53 (WTAITLFIFLVCCQIPLFGI). The Lumenal segment spans residues 54–76 (MSSDSADPFYWMRVILASNRGTL). A helical membrane pass occupies residues 77 to 96 (MELGISPIVTSGLIMQLLAG). The Cytoplasmic segment spans residues 97 to 117 (AKIIEVGDTPKDRALFNGAQK). Residues 118-138 (LFGMIITIGQSIVYVMTGMYG) traverse the membrane as a helical segment. Topologically, residues 139-144 (DPSEMG) are lumenal. A helical membrane pass occupies residues 145-165 (AGICLLITIQLFVAGLIVLLL). At 166-172 (DELLQKG) the chain is on the cytoplasmic side. Residues 173-193 (YGLGSGISLFIATNICETIVW) form a helical membrane-spanning segment. Over 194 to 240 (KAFSPTTVNTGRGMEFEGAIIALFHLLATRTDKVRALREAFYRQNLP) the chain is Lumenal. A helical membrane pass occupies residues 241-261 (NLMNLIATIFVFAVVIYFQGF). At 262–288 (RVDLPIKSARYRGQYNTYPIKLFYTSN) the chain is on the cytoplasmic side. Residues 289–309 (IPIILQSALVSNLYVISQMLS) traverse the membrane as a helical segment. Over 310 to 354 (ARFSGNLLVSLLGTWSDTSSGGPARAYPVGGLCYYLSPPESFGSV) the chain is Lumenal. Residues 355-375 (LEDPVHAVVYIVFMLGSCAFF) traverse the membrane as a helical segment. Over 376–420 (SKTWIEVSGSSAKDVAKQLKEQQMVMRGHRETSMVHELNRYIPTA) the chain is Cytoplasmic. Residues 421–441 (AAFGGLCIGALSVLADFLGAI) traverse the membrane as a helical segment. The Lumenal portion of the chain corresponds to 442–445 (GSGT). A helical membrane pass occupies residues 446-462 (GILLAVTIIYQYFEIFV). The Cytoplasmic portion of the chain corresponds to 463–476 (KEQSEVGSMGALLF).

Belongs to the SecY/SEC61-alpha family. In terms of assembly, the SEC61 channel-forming translocon complex consists of channel-forming core components SEC61A1, SEC61B and SEC61G and different auxiliary components such as SEC62 and SEC63. The SEC61 channel associates with the multi-pass translocon (MPT) complex. Expressed in proximal and distal tubules in kidney (at protein level).

It localises to the endoplasmic reticulum membrane. Component of SEC61 channel-forming translocon complex that mediates transport of signal peptide-containing precursor polypeptides across the endoplasmic reticulum (ER). Forms a ribosome receptor and a gated pore in the ER membrane, both functions required for cotranslational translocation of nascent polypeptides. May cooperate with auxiliary protein SEC62, SEC63 and HSPA5/BiP to enable post-translational transport of small presecretory proteins. The SEC61 channel is also involved in ER membrane insertion of transmembrane proteins: it mediates membrane insertion of the first few transmembrane segments of proteins, while insertion of subsequent transmembrane regions of multi-pass membrane proteins is mediated by the multi-pass translocon (MPT) complex. The SEC61 channel cooperates with the translocating protein TRAM1 to import nascent proteins into the ER. Controls the passive efflux of calcium ions from the ER lumen to the cytosol through SEC61 channel, contributing to the maintenance of cellular calcium homeostasis. Plays a critical role in nephrogenesis, specifically at pronephros stage. In Homo sapiens (Human), this protein is Protein transport protein Sec61 subunit alpha isoform 1 (SEC61A1).